Here is a 166-residue protein sequence, read N- to C-terminus: 3-isopropylmalate dehydratase small subunit 2 (166 aa).

This sequence belongs to the LeuD family. LeuD type 2 subfamily. As to quaternary structure, heterodimer of LeuC and LeuD.

The catalysed reaction is (2R,3S)-3-isopropylmalate = (2S)-2-isopropylmalate. Its pathway is amino-acid biosynthesis; L-leucine biosynthesis; L-leucine from 3-methyl-2-oxobutanoate: step 2/4. Catalyzes the isomerization between 2-isopropylmalate and 3-isopropylmalate, via the formation of 2-isopropylmaleate. In Thermotoga maritima (strain ATCC 43589 / DSM 3109 / JCM 10099 / NBRC 100826 / MSB8), this protein is 3-isopropylmalate dehydratase small subunit 2 (leuD2).